Reading from the N-terminus, the 432-residue chain is MARSIVVLGAQWGDEGKGKIVDWLTSRAQYVVRYQGGHNAGHTIVVDQQKITLHLIPSGILHNHVTAVIANGVVLSPFSLIKEMKMLLKLGVSTCKRIFISASCPLLLPYHVAMDLARENHHISKAIGTTGCGIGPSYEDKVARRALRVSDLYNLKYFKNKLKDVVDYYNFQLVYYYKTKPINYQIVLEEVMSISDILIDMVVDVPELLDDAAKRGDSVIFEGAQGSLLDIDHGTYPYVTSSHTIAGSVSVGAGVGLNYIDYVLGIVKAYSTRVGFGPFPTELSNDTGNWLCMNGNEFGSTTGRRRRTGWFDAVSVRYSVKINSFFSCCLTKIDVLDGLKELKICIAYRKKNGKVIHNFPCSLEELENCVPIYEILPGWMISTVGITEFHQLPKESQLYVKRIEELIGVPIHIVSTGSDRSAIIILRNPFDS.

Residues 13-19 and 41-43 contribute to the GTP site; these read GDEGKGK and GHT. Catalysis depends on Asp-14, which acts as the Proton acceptor. Mg(2+) contacts are provided by Asp-14 and Gly-41. IMP-binding positions include 14–17, 39–42, Thr-130, Arg-144, Gln-225, Thr-240, and Arg-304; these read DEGK and NAGH. His-42 functions as the Proton donor in the catalytic mechanism. 300-306 is a substrate binding site; the sequence is STTGRRR. GTP-binding positions include Arg-306, 332–334, and 415–417; these read KID and STG.

The protein belongs to the adenylosuccinate synthetase family. In terms of assembly, homodimer. Mg(2+) serves as cofactor.

It is found in the cytoplasm. It catalyses the reaction IMP + L-aspartate + GTP = N(6)-(1,2-dicarboxyethyl)-AMP + GDP + phosphate + 2 H(+). Its pathway is purine metabolism; AMP biosynthesis via de novo pathway; AMP from IMP: step 1/2. In terms of biological role, plays an important role in the de novo pathway of purine nucleotide biosynthesis. Catalyzes the first committed step in the biosynthesis of AMP from IMP. This Blochmanniella pennsylvanica (strain BPEN) protein is Adenylosuccinate synthetase.